We begin with the raw amino-acid sequence, 214 residues long: MEPLSLIYEQAYWQQGYSRVVGVDEVGRGCLAGPVVAAAVILPVDCVPLPEVRDSKQLTARQRSRLFAQIYHQAIAIGIGSASVAEIDQVNILQATYRAMARALGRVAPWDHALIDGKLTKTAPFERVTAIIGGDRHSYSIACASIIAKVRRDRFMARLARRYPQYGWERNVGYGTPEHRQALDQYGLTPWHRRSFLKSLLPSEAHLCNAIPAE.

Residues 18 to 208 form the RNase H type-2 domain; sequence SRVVGVDEVG…SLLPSEAHLC (191 aa). Residues Asp24, Glu25, and Asp116 each coordinate a divalent metal cation.

Belongs to the RNase HII family. It depends on Mn(2+) as a cofactor. The cofactor is Mg(2+).

It is found in the cytoplasm. The catalysed reaction is Endonucleolytic cleavage to 5'-phosphomonoester.. Functionally, endonuclease that specifically degrades the RNA of RNA-DNA hybrids. The chain is Ribonuclease HII from Thermosynechococcus vestitus (strain NIES-2133 / IAM M-273 / BP-1).